The chain runs to 593 residues: MGPGLGNGPDEFRARRERDVTALLSQISYLEEEIGLLRRKVAESPRQLRLLEERLAEAEGRAAFLSERNDKLAGTLRDARDQLVTLKEEVDRLGQPPSGYGVFLTRHDDGTVDVFTGGRKLRVSVSPAVEVDVLQHGQEVMLNEAMNVVEACGFERAGDVVMLKELLEPVEGEAPRALVIGHTDEERVVHLAESLTDQPLRSGDSLLLETRSGYVYERIPKSEVEELVLEEVPDIDYGDIGGLSRQIEQIRDAVELPFLHADLFREYELRPPKGILLYGPPGCGKTLIAKAVANSLAKKVSAVKGEGQAKSYFLNIKGPELLNKYVGETERHIRLVFQRAREKAGEGTPVIVFFDEMDSIFRTRGSGVSSDVESTIVPQLLSEIDGVEGLENVIVIGASNREDMIDPAILRPGRLDVKIKIERPDAEAARDIFSKYLTTTLPLHPDDLAEHGNSREATVGGMIQRTVERMYTESEENRFLEVTYANGDKEVLYFKDFNSGAMLQNIVDRAKKMAIKERLETGAGGLRVGHLMQACVDEFKENEDLPNTTNPDDWARISGKKGERIVYIRTLISGKGAESGRAIDTATNTGQYL.

A coiled-coil region spans residues 23-95 (LLSQISYLEE…LKEEVDRLGQ (73 aa)). 282–287 (GCGKTL) contributes to the ATP binding site. A docks into pockets in the proteasome alpha-ring region spans residues 592–593 (YL).

This sequence belongs to the AAA ATPase family. In terms of assembly, homohexamer. Assembles into a hexameric ring structure that caps the 20S proteasome core. Strongly interacts with the prokaryotic ubiquitin-like protein Pup through a hydrophobic interface; the interacting region of ARC lies in its N-terminal coiled-coil domain. There is one Pup binding site per ARC hexamer ring. Upon ATP-binding, the C-terminus of ARC interacts with the alpha-rings of the proteasome core, possibly by binding to the intersubunit pockets.

It participates in protein degradation; proteasomal Pup-dependent pathway. Its function is as follows. ATPase which is responsible for recognizing, binding, unfolding and translocation of pupylated proteins into the bacterial 20S proteasome core particle. May be essential for opening the gate of the 20S proteasome via an interaction with its C-terminus, thereby allowing substrate entry and access to the site of proteolysis. Thus, the C-termini of the proteasomal ATPase may function like a 'key in a lock' to induce gate opening and therefore regulate proteolysis. This chain is Proteasome-associated ATPase, found in Geodermatophilus obscurus (strain ATCC 25078 / DSM 43160 / JCM 3152 / CCUG 61914 / KCC A-0152 / KCTC 9177 / NBRC 13315 / NRRL B-3577 / G-20).